Here is a 425-residue protein sequence, read N- to C-terminus: Ribulose bisphosphate carboxylase (425 aa).

The active-site Proton acceptor is the lysine 153. Lysine 155 contacts substrate. Residues lysine 179, aspartate 181, and glutamate 182 each contribute to the Mg(2+) site. An N6-carboxylysine modification is found at lysine 179. Histidine 269 serves as the catalytic Proton acceptor. Residues arginine 270, histidine 302, 353–355 (SGG), and 375–378 (QAGG) each bind substrate.

This sequence belongs to the RuBisCO large chain family. Type III subfamily. Homodimer. In contrast to form I RuBisCO, the form III RuBisCO is composed solely of large subunits. Mg(2+) serves as cofactor.

It carries out the reaction 2 (2R)-3-phosphoglycerate + 2 H(+) = D-ribulose 1,5-bisphosphate + CO2 + H2O. The catalysed reaction is D-ribulose 1,5-bisphosphate + O2 = 2-phosphoglycolate + (2R)-3-phosphoglycerate + 2 H(+). Its activity is regulated as follows. Reversibly inhibited by O(2). Functionally, catalyzes the addition of molecular CO(2) and H(2)O to ribulose 1,5-bisphosphate (RuBP), generating two molecules of 3-phosphoglycerate (3-PGA). Functions in an archaeal AMP degradation pathway, together with AMP phosphorylase and R15P isomerase. The protein is Ribulose bisphosphate carboxylase of Methanocaldococcus jannaschii (strain ATCC 43067 / DSM 2661 / JAL-1 / JCM 10045 / NBRC 100440) (Methanococcus jannaschii).